Here is a 604-residue protein sequence, read N- to C-terminus: Ribosome-inactivating protein PMRIPm (604 aa).

The signal sequence occupies residues 1–43; it reads MRVVAAILYINVVVALICGLGIQGGALDLQDYPSVSFQGDAMQ. Glu211 is a catalytic residue. Intrachain disulfides connect Cys301-Cys332, Cys348-Cys367, and Cys392-Cys409. Ricin B-type lectin domains are found at residues 335 to 463 and 466 to 598; these read GEPT…WRVG and VEPI…WLTV. A 1-alpha repeat occupies 345 to 387; the sequence is AGWCVDVKDGRDNDGNPIQVLSCGDGQERKQQWTFHRDGTIRS. A 1-beta repeat occupies 389–429; sequence LGKCMTAYGFKHGEYVMIYDCDTAIAGANKWVVSIDGTITN. Residues 432 to 465 form a 1-gamma repeat; sequence SGLVLTAPRGATGTTLLVEKNVHAARQCWRVGDD. A 2-alpha repeat occupies 477–521; it reads QEKCLEANYLENTNVSRYTKVFLDDCVLDRQQQRWALYSDGTIRA. The cysteines at positions 480 and 502 are disulfide-linked. N-linked (GlcNAc...) asparagine glycosylation occurs at Asn490. A 2-beta repeat occupies 525-563; that stretch reads RSLRVTADGHRSLDSIIILACKGWGNQRWVFNTDGTILN. One copy of the 2-gamma repeat lies at 566–599; that stretch reads AKLVMDVKDSDVSLLQIILHQSTGKPNQKWLTVT.

This sequence belongs to the ribosome-inactivating protein family. Type 2 RIP subfamily. As to quaternary structure, disulfide-linked dimer of A and B chains. Post-translationally, the precursor is processed in two chains, A and B, that are linked by a disulfide bond. Glycosylated. In terms of processing, the N-terminus is blocked. Expressed in rhizome and abundantly in leaves (at protein level).

It catalyses the reaction Endohydrolysis of the N-glycosidic bond at one specific adenosine on the 28S rRNA.. With respect to regulation, strongly inhibited by asialofetuin and asialomucin. Gal/GalNAc-specific agglutinin. Behaves as a type-2 ribosome-inactivating protein. Inhibits mammalian ribosomes. The A chain is responsible for inhibiting protein synthesis through the catalytic inactivation of 60S ribosomal subunits by removing adenine from position 4,324 of 28S rRNA. The B chain binds to cell receptors and probably facilitates the entry into the cell of the A chain; B chains are also responsible for cell agglutination (lectin activity). Involved in plant defense against insects. Has very low cytotoxic activity against the human tumor cell line Molt4, but higher against CEM. The protein is Ribosome-inactivating protein PMRIPm of Polygonatum multiflorum (Solomon's seal).